The chain runs to 534 residues: Chaperonin GroEL, chloroplastic (534 aa).

ATP-binding positions include 29 to 32 (TLGP), 86 to 90 (DGTTT), Gly-414, and Asp-496.

Belongs to the chaperonin (HSP60) family. Forms a cylinder of 14 subunits composed of two heptameric rings stacked back-to-back. Interacts with the co-chaperonin GroES.

It localises to the plastid. It is found in the chloroplast. It carries out the reaction ATP + H2O + a folded polypeptide = ADP + phosphate + an unfolded polypeptide.. In terms of biological role, together with its co-chaperonin GroES, plays an essential role in assisting protein folding. The GroEL-GroES system forms a nano-cage that allows encapsulation of the non-native substrate proteins and provides a physical environment optimized to promote and accelerate protein folding. The sequence is that of Chaperonin GroEL, chloroplastic from Galdieria sulphuraria (Red alga).